The following is a 508-amino-acid chain: Photosystem II CP47 reaction center protein (508 aa).

6 helical membrane-spanning segments follow: residues 21 to 36, 101 to 115, 140 to 156, 203 to 218, 237 to 252, and 457 to 472; these read AVHI…WAGS, IVFS…IWHW, GIHL…FGAF, IAAG…FHLS, VLSS…AFIV, and TFAL…HGAR.

It belongs to the PsbB/PsbC family. PsbB subfamily. As to quaternary structure, PSII is composed of 1 copy each of membrane proteins PsbA, PsbB, PsbC, PsbD, PsbE, PsbF, PsbH, PsbI, PsbJ, PsbK, PsbL, PsbM, PsbT, PsbX, PsbY, PsbZ, Psb30/Ycf12, at least 3 peripheral proteins of the oxygen-evolving complex and a large number of cofactors. It forms dimeric complexes. Binds multiple chlorophylls. PSII binds additional chlorophylls, carotenoids and specific lipids. is required as a cofactor.

The protein localises to the plastid. It is found in the chloroplast thylakoid membrane. One of the components of the core complex of photosystem II (PSII). It binds chlorophyll and helps catalyze the primary light-induced photochemical processes of PSII. PSII is a light-driven water:plastoquinone oxidoreductase, using light energy to abstract electrons from H(2)O, generating O(2) and a proton gradient subsequently used for ATP formation. This is Photosystem II CP47 reaction center protein from Gnetum parvifolium (Small-leaved jointfir).